The sequence spans 339 residues: 3-isopropylmalate dehydrogenase (339 aa).

Substrate contacts are provided by arginine 88, arginine 98, arginine 122, and aspartate 212. 3 residues coordinate Mg(2+): aspartate 212, aspartate 236, and aspartate 240. An NAD(+)-binding site is contributed by 272-284; the sequence is GSAPDIAGQGIAD.

The protein belongs to the isocitrate and isopropylmalate dehydrogenases family. LeuB type 2 subfamily. As to quaternary structure, homodimer. Mg(2+) is required as a cofactor. The cofactor is Mn(2+).

The protein resides in the cytoplasm. It carries out the reaction (2R,3S)-3-isopropylmalate + NAD(+) = 4-methyl-2-oxopentanoate + CO2 + NADH. Its pathway is amino-acid biosynthesis; L-leucine biosynthesis; L-leucine from 3-methyl-2-oxobutanoate: step 3/4. Catalyzes the oxidation of 3-carboxy-2-hydroxy-4-methylpentanoate (3-isopropylmalate) to 3-carboxy-4-methyl-2-oxopentanoate. The product decarboxylates to 4-methyl-2 oxopentanoate. In Corynebacterium diphtheriae (strain ATCC 700971 / NCTC 13129 / Biotype gravis), this protein is 3-isopropylmalate dehydrogenase.